Reading from the N-terminus, the 492-residue chain is Steroid 21-hydroxylase (492 aa).

Positions 91 and 120 each coordinate heme b. A 17alpha-hydroxyprogesterone-binding site is contributed by arginine 231. Arginine 231 provides a ligand contact to progesterone. Heme b-binding residues include histidine 363, arginine 424, and cysteine 426.

The protein belongs to the cytochrome P450 family. It depends on heme b as a cofactor.

Its subcellular location is the endoplasmic reticulum membrane. It localises to the microsome membrane. The enzyme catalyses 17alpha-hydroxyprogesterone + reduced [NADPH--hemoprotein reductase] + O2 = 11-deoxycortisol + oxidized [NADPH--hemoprotein reductase] + H2O + H(+). It carries out the reaction progesterone + reduced [NADPH--hemoprotein reductase] + O2 = 21-hydroxyprogesterone + oxidized [NADPH--hemoprotein reductase] + H2O + H(+). Its function is as follows. Specifically catalyzes the 21-hydroxylation of steroids. Required for the adrenal synthesis of mineralocorticoids and glucocorticoids. This is Steroid 21-hydroxylase (CYP21) from Lynx lynx (Eurasian lynx).